The chain runs to 665 residues: Phenol hydroxylase (665 aa).

FAD is bound by residues 18-19, 43-45, 51-56, Q118, Y290, D358, and 368-372; these read PA, DKR, NGQADG, and GQGMN. D55 serves as a coordination point for substrate. Y290 serves as a coordination point for substrate.

It belongs to the PheA/TfdB FAD monooxygenase family. As to quaternary structure, homodimer. Requires FAD as cofactor.

It catalyses the reaction phenol + NADPH + O2 + H(+) = catechol + NADP(+) + H2O. The protein operates within aromatic compound metabolism; phenol degradation. With respect to regulation, inhibited by excess phenol. Heavy metals such AsCuSO(4), AgNO(3), or HgCl(2) severely inhibit activity. In terms of biological role, hydroxylates phenol to catechol. Phenol is the best substrate, but the enzyme also accepts isomeric diphenols, hydroxyl-, amino-, halogen- or methyl-substituted phenols and, to a lesser degree, cresols. In Cutaneotrichosporon cutaneum (Yeast), this protein is Phenol hydroxylase.